A 447-amino-acid polypeptide reads, in one-letter code: Cysteine--tRNA ligase (447 aa).

Cys28 lines the Zn(2+) pocket. Positions 30-40 (PTVYNYIHIGN) match the 'HIGH' region motif. Positions 211, 236, and 240 each coordinate Zn(2+). The 'KMSKS' region motif lies at 268–272 (KMSKS). Lys271 provides a ligand contact to ATP.

Belongs to the class-I aminoacyl-tRNA synthetase family. As to quaternary structure, monomer. Requires Zn(2+) as cofactor.

The protein localises to the cytoplasm. It catalyses the reaction tRNA(Cys) + L-cysteine + ATP = L-cysteinyl-tRNA(Cys) + AMP + diphosphate. This chain is Cysteine--tRNA ligase, found in Streptococcus agalactiae serotype Ia (strain ATCC 27591 / A909 / CDC SS700).